The primary structure comprises 144 residues: Protein MIX23 (144 aa).

An N-acetylalanine modification is found at Ala-2. A coiled-coil region spans residues 82–120 (VKNLREEREKNLDDLTLLKQLRKEQTKLKWMQSELNVEE). An N6-acetyllysine modification is found at Lys-100.

The protein belongs to the MIX23 family.

The polypeptide is Protein MIX23 (Homo sapiens (Human)).